The primary structure comprises 445 residues: Phosphoglucosamine mutase (445 aa).

Ser-102 acts as the Phosphoserine intermediate in catalysis. The Mg(2+) site is built by Ser-102, Asp-241, Asp-243, and Asp-245. At Ser-102 the chain carries Phosphoserine.

It belongs to the phosphohexose mutase family. Requires Mg(2+) as cofactor. Activated by phosphorylation.

The enzyme catalyses alpha-D-glucosamine 1-phosphate = D-glucosamine 6-phosphate. Catalyzes the conversion of glucosamine-6-phosphate to glucosamine-1-phosphate. The chain is Phosphoglucosamine mutase from Novosphingobium aromaticivorans (strain ATCC 700278 / DSM 12444 / CCUG 56034 / CIP 105152 / NBRC 16084 / F199).